A 116-amino-acid polypeptide reads, in one-letter code: Somatostatin (116 aa).

The N-terminal stretch at 1–24 is a signal peptide; it reads MLSCRLQCALAALSIVLALGGVTG. Positions 25–88 are excised as a propeptide; the sequence is APSDPRLRQF…QDEMRLELQR (64 aa). A43 carries the alanine amide modification. A disulfide bond links C105 and C116.

This sequence belongs to the somatostatin family. C-terminal amidation of the neuronostatin peptide is required for its biological activity, including for the regulation of mean arterial pressure.

It localises to the secreted. Functionally, inhibits the secretion of pituitary hormones, including that of growth hormone/somatotropin (GH1), PRL, ACTH, luteinizing hormone (LH) and TSH. Also impairs ghrelin- and GnRH-stimulated secretion of GH1 and LH; the inhibition of ghrelin-stimulated secretion of GH1 can be further increased by neuronostatin. May enhance low-glucose-induced glucagon release by pancreatic alpha cells. This effect may be mediated by binding to GPR107 and PKA activation. May regulate cardiac contractile function. May compromise cardiomyocyte viability. In the central nervous system, may impair memory retention and may affect hippocampal excitability. May also have anxiolytic and anorexigenic effects. May play a role in arterial pressure regulation. May inhibit basal, but not ghrelin- or GnRH-stimulated secretion of GH1 or LH, but does not affect the release of other pituitary hormones, including PRL, ACTH, FSH or TSH. Potentiates inhibitory action of somatostatin on ghrelin-stimulated secretion of GH1, but not that on GnRH-stimulated secretion of LH. This is Somatostatin (SST) from Bos taurus (Bovine).